Reading from the N-terminus, the 139-residue chain is Two-component response regulator 24 (139 aa).

The Response regulatory domain maps to 19–134; that stretch reads TALVVDDSFV…KLLSILHKLN (116 aa). Position 69 is a 4-aspartylphosphate (D69).

The protein belongs to the ARR family. Type-A subfamily. Two-component system major event consists of a His-to-Asp phosphorelay between a sensor histidine kinase (HK) and a response regulator (RR). In plants, the His-to-Asp phosphorelay involves an additional intermediate named Histidine-containing phosphotransfer protein (HPt). This multistep phosphorelay consists of a His-Asp-His-Asp sequential transfer of a phosphate group between first a His and an Asp of the HK protein, followed by the transfer to a conserved His of the HPt protein and finally the transfer to an Asp in the receiver domain of the RR protein. As to expression, mostly expressed in flowers and siliques, primarily restricted to pollen grains.

The protein resides in the nucleus. Functions as a response regulator involved in His-to-Asp phosphorelay signal transduction system. Phosphorylation of the Asp residue in the receiver domain activates the ability of the protein to promote the transcription of target genes. Type-A response regulators seem to act as negative regulators of the cytokinin signaling. This Arabidopsis thaliana (Mouse-ear cress) protein is Two-component response regulator 24.